The sequence spans 244 residues: MVHITRFEAPWFLKVGKKEYKWIIRSRAGPHKIQESVPLAILLKYYLKAVDTTREAKRIIFDGKVLVDGKVRRDYKYPVGLMDVVEIPSADLRVRIIPDNVRYLTTINISREDAKYKFVRIMNKTTLKSGVLQLNLEDGRNILLKGEELSQYNLPTLTTLKIELPEQKITTAYTIKEGVYAMIIGGRNAGLHGKISKIQLAKYKRIKYSLVTLEGKDGSTFQTNLINVMAIGENEADSNLGVKL.

The region spanning 37–123 is the S4 RNA-binding domain; sequence VPLAILLKYY…AKYKFVRIMN (87 aa).

Belongs to the eukaryotic ribosomal protein eS4 family.

This Sulfolobus acidocaldarius (strain ATCC 33909 / DSM 639 / JCM 8929 / NBRC 15157 / NCIMB 11770) protein is Small ribosomal subunit protein eS4 (rps4e).